Consider the following 296-residue polypeptide: Cobalamin trafficking protein CblD (296 aa).

The transit peptide at 1 to 92 directs the protein to the mitochondrion; the sequence is MANVLCNRAR…HLNGTAAQRK (92 aa).

Heterodimer with MMACHC. Forms a multiprotein complex with MMACHC, MTR and MTRR.

Its subcellular location is the cytoplasm. The protein resides in the mitochondrion. Involved in cobalamin metabolism and trafficking. Plays a role in regulating the biosynthesis and the proportion of two coenzymes, methylcob(III)alamin (MeCbl) and 5'-deoxyadenosylcobalamin (AdoCbl). Promotes oxidation of cob(II)alamin bound to MMACHC. The processing of cobalamin in the cytosol occurs in a multiprotein complex composed of at least MMACHC, MMADHC, MTRR (methionine synthase reductase) and MTR (methionine synthase) which may contribute to shuttle safely and efficiently cobalamin towards MTR in order to produce methionine. The chain is Cobalamin trafficking protein CblD (MMADHC) from Gallus gallus (Chicken).